Consider the following 201-residue polypeptide: Large ribosomal subunit protein eL15A (201 aa).

A disordered region spans residues 161–182 (SRGLTSIGKKSRGIGKGHRFNN). Residues 169–179 (KKSRGIGKGHR) show a composition bias toward basic residues.

Belongs to the eukaryotic ribosomal protein eL15 family. Component of the large ribosomal subunit (LSU). Mature yeast ribosomes consist of a small (40S) and a large (60S) subunit. The 40S small subunit contains 1 molecule of ribosomal RNA (18S rRNA) and at least 33 different proteins. The large 60S subunit contains 3 rRNA molecules (25S, 5.8S and 5S rRNA) and at least 46 different proteins.

Its subcellular location is the cytoplasm. The protein localises to the nucleus. It is found in the nucleolus. Its function is as follows. Component of the ribosome, a large ribonucleoprotein complex responsible for the synthesis of proteins in the cell. The small ribosomal subunit (SSU) binds messenger RNAs (mRNAs) and translates the encoded message by selecting cognate aminoacyl-transfer RNA (tRNA) molecules. The large subunit (LSU) contains the ribosomal catalytic site termed the peptidyl transferase center (PTC), which catalyzes the formation of peptide bonds, thereby polymerizing the amino acids delivered by tRNAs into a polypeptide chain. The nascent polypeptides leave the ribosome through a tunnel in the LSU and interact with protein factors that function in enzymatic processing, targeting, and the membrane insertion of nascent chains at the exit of the ribosomal tunnel. The sequence is that of Large ribosomal subunit protein eL15A (rpl15) from Schizosaccharomyces pombe (strain 972 / ATCC 24843) (Fission yeast).